We begin with the raw amino-acid sequence, 127 residues long: Putative defensin-like protein 180 (127 aa).

Positions 1–26 (MERITSLVFFASFLIIFVSGVNQTRA) are cleaved as a signal peptide. Cystine bridges form between cysteine 29-cysteine 70, cysteine 36-cysteine 55, cysteine 39-cysteine 64, cysteine 43-cysteine 66, cysteine 81-cysteine 127, cysteine 92-cysteine 112, cysteine 97-cysteine 121, and cysteine 101-cysteine 123.

This sequence belongs to the DEFL family.

It localises to the secreted. This chain is Putative defensin-like protein 180 (LCR58), found in Arabidopsis thaliana (Mouse-ear cress).